Here is a 164-residue protein sequence, read N- to C-terminus: Elicitin-like protein 2 (164 aa).

The signal sequence occupies residues 1-22 (MFSKTLVVLAAVAAVTVNGLTA). 3 cysteine pairs are disulfide-bonded: C25/C91, C47/C76, and C71/C118. Residues 121-164 (ISGGGSTPTTAPPSGTTPTTPTTAPPTGTTPGVTPSPTTPKPAC) are disordered. The span at 127–156 (TPTTAPPSGTTPTTPTTAPPTGTTPGVTPS) shows a compositional bias: low complexity.

This sequence belongs to the elicitin family.

It is found in the secreted. Functionally, induces local and distal defense responses (incompatible hypersensitive reaction) in plants from the solanaceae and cruciferae families. Elicits leaf necrosis and causes the accumulation of pathogenesis-related proteins. Might interact with the lipidic molecules of the plasma membrane. This is Elicitin-like protein 2 (POD-2) from Pythium oligandrum (Mycoparasitic fungus).